Consider the following 187-residue polypeptide: Large ribosomal subunit protein uL18 (187 aa).

The protein belongs to the universal ribosomal protein uL18 family. In terms of assembly, part of the 50S ribosomal subunit. Interacts with proteins L5 and L21e, and attaches the 5S rRNA to the 23S rRNA. Has been cross-linked to L21e.

Functionally, this is one of 5 proteins that mediate the attachment of the 5S rRNA onto the large ribosomal subunit, where it forms part of the central protuberance and stabilizes the orientation of adjacent RNA domains. This chain is Large ribosomal subunit protein uL18 (rpl18), found in Haloarcula marismortui (strain ATCC 43049 / DSM 3752 / JCM 8966 / VKM B-1809) (Halobacterium marismortui).